We begin with the raw amino-acid sequence, 73 residues long: UPF0154 protein BCG9842_B1526 (73 aa).

A helical membrane pass occupies residues I3–F23.

This sequence belongs to the UPF0154 family.

The protein localises to the cell membrane. This Bacillus cereus (strain G9842) protein is UPF0154 protein BCG9842_B1526.